The following is a 216-amino-acid chain: Elongation factor Ts (216 aa).

The tract at residues 80-83 (TDFV) is involved in Mg(2+) ion dislocation from EF-Tu.

This sequence belongs to the EF-Ts family.

The protein localises to the cytoplasm. Associates with the EF-Tu.GDP complex and induces the exchange of GDP to GTP. It remains bound to the aminoacyl-tRNA.EF-Tu.GTP complex up to the GTP hydrolysis stage on the ribosome. The protein is Elongation factor Ts of Alkaliphilus oremlandii (strain OhILAs) (Clostridium oremlandii (strain OhILAs)).